Reading from the N-terminus, the 70-residue chain is Cold shock-like protein (70 aa).

The CSD domain occupies glycine 5–valine 65.

It localises to the cytoplasm. This chain is Cold shock-like protein (csp), found in Aquifex aeolicus (strain VF5).